We begin with the raw amino-acid sequence, 208 residues long: Uracil phosphoribosyltransferase (208 aa).

Residues arginine 78, arginine 103, and 130-138 each bind 5-phospho-alpha-D-ribose 1-diphosphate; that span reads DPMLATGGT. Uracil-binding positions include isoleucine 193 and 198–200; that span reads GDA. Aspartate 199 lines the 5-phospho-alpha-D-ribose 1-diphosphate pocket.

The protein belongs to the UPRTase family. The cofactor is Mg(2+).

It carries out the reaction UMP + diphosphate = 5-phospho-alpha-D-ribose 1-diphosphate + uracil. It participates in pyrimidine metabolism; UMP biosynthesis via salvage pathway; UMP from uracil: step 1/1. With respect to regulation, allosterically activated by GTP. Catalyzes the conversion of uracil and 5-phospho-alpha-D-ribose 1-diphosphate (PRPP) to UMP and diphosphate. This chain is Uracil phosphoribosyltransferase, found in Nitratidesulfovibrio vulgaris (strain ATCC 29579 / DSM 644 / CCUG 34227 / NCIMB 8303 / VKM B-1760 / Hildenborough) (Desulfovibrio vulgaris).